The sequence spans 359 residues: tRNA-specific 2-thiouridylase MnmA (359 aa).

ATP is bound by residues 9 to 16 and M35; that span reads GISGGVDS. The tract at residues 95–97 is interaction with target base in tRNA; the sequence is NPD. The Nucleophile role is filled by C100. Cysteines 100 and 197 form a disulfide. An ATP-binding site is contributed by G124. The interaction with tRNA stretch occupies residues 147-149; it reads KDQ. The active-site Cysteine persulfide intermediate is C197. An interaction with tRNA region spans residues 309–310; it reads RY.

It belongs to the MnmA/TRMU family.

Its subcellular location is the cytoplasm. The enzyme catalyses S-sulfanyl-L-cysteinyl-[protein] + uridine(34) in tRNA + AH2 + ATP = 2-thiouridine(34) in tRNA + L-cysteinyl-[protein] + A + AMP + diphosphate + H(+). Catalyzes the 2-thiolation of uridine at the wobble position (U34) of tRNA, leading to the formation of s(2)U34. In Francisella philomiragia subsp. philomiragia (strain ATCC 25017 / CCUG 19701 / FSC 153 / O#319-036), this protein is tRNA-specific 2-thiouridylase MnmA.